We begin with the raw amino-acid sequence, 199 residues long: Recombination protein RecR (199 aa).

The C4-type zinc-finger motif lies at 56–71 (CQVCFHLSAESTCEIC). In terms of domain architecture, Toprim spans 79-173 (QTLCVVADSR…KVTRIAFGLP (95 aa)).

This sequence belongs to the RecR family.

Its function is as follows. May play a role in DNA repair. It seems to be involved in an RecBC-independent recombinational process of DNA repair. It may act with RecF and RecO. This is Recombination protein RecR from Gloeothece citriformis (strain PCC 7424) (Cyanothece sp. (strain PCC 7424)).